Reading from the N-terminus, the 193-residue chain is Phosphoheptose isomerase (193 aa).

Residues 37 to 193 form the SIS domain; sequence LANAFKAGGK…QLIEKEMADQ (157 aa). 52 to 54 provides a ligand contact to substrate; that stretch reads NGG. Residues H61 and E65 each coordinate Zn(2+). Residues E65, 93–94, 119–121, S124, and Q172 contribute to the substrate site; these read ND and STS. 2 residues coordinate Zn(2+): Q172 and H180.

It belongs to the SIS family. GmhA subfamily. Homotetramer. Requires Zn(2+) as cofactor.

Its subcellular location is the cytoplasm. It catalyses the reaction 2 D-sedoheptulose 7-phosphate = D-glycero-alpha-D-manno-heptose 7-phosphate + D-glycero-beta-D-manno-heptose 7-phosphate. Its pathway is carbohydrate biosynthesis; D-glycero-D-manno-heptose 7-phosphate biosynthesis; D-glycero-alpha-D-manno-heptose 7-phosphate and D-glycero-beta-D-manno-heptose 7-phosphate from sedoheptulose 7-phosphate: step 1/1. Functionally, catalyzes the isomerization of sedoheptulose 7-phosphate in D-glycero-D-manno-heptose 7-phosphate. The protein is Phosphoheptose isomerase of Pectobacterium atrosepticum (strain SCRI 1043 / ATCC BAA-672) (Erwinia carotovora subsp. atroseptica).